We begin with the raw amino-acid sequence, 155 residues long: Protein SREK1IP1 (155 aa).

A CCHC-type zinc finger spans residues 13 to 30; the sequence is AGCKKCGYPGHLTFECRN. The disordered stretch occupies residues 44–155; it reads VSSTSSEDSD…TPNSSEFSRK (112 aa). Serine 52 is modified (phosphoserine). Basic and acidic residues predominate over residues 66-84; that stretch reads QEKRINEEEEKKKEKSKEK. Residues 85-94 are compositionally biased toward basic residues; that stretch reads IKLKKKRKRS. 2 positions are modified to phosphoserine: serine 96 and serine 97. The span at 107–142 shows a compositional bias: basic residues; the sequence is QKKQKYQKKEKKKEKKSKSKKGKHHKKEKKKRKKEK. At threonine 146 the chain carries Phosphothreonine. The segment covering 146 to 155 has biased composition (polar residues); the sequence is TPNSSEFSRK.

Interacts with SREK1/SFRS12.

In terms of biological role, possible splicing regulator involved in the control of cellular survival. The chain is Protein SREK1IP1 (SREK1IP1) from Homo sapiens (Human).